The chain runs to 283 residues: Methylamine utilization ferredoxin-type protein MauN (283 aa).

4Fe-4S ferredoxin-type domains are found at residues 217–248 and 251–280; these read VRVS…PALK and GSPL…MASR. The [4Fe-4S] cluster site is built by Cys227, Cys230, Cys233, Cys237, Cys260, Cys263, Cys266, and Cys270.

It functions in the pathway one-carbon metabolism; methylamine degradation. Functionally, involved in electron transfer. The chain is Methylamine utilization ferredoxin-type protein MauN (mauN) from Paracoccus denitrificans (strain Pd 1222).